A 616-amino-acid polypeptide reads, in one-letter code: Glutamine--fructose-6-phosphate aminotransferase [isomerizing] (616 aa).

The active-site Nucleophile; for GATase activity is the cysteine 2. The Glutamine amidotransferase type-2 domain occupies 2 to 221; that stretch reads CGIVGYVGTD…QDQIVTITPE (220 aa). 2 consecutive SIS domains span residues 288 to 428 and 461 to 606; these read LGDE…VRGT and LAHW…VDQP. Catalysis depends on lysine 611, which acts as the For Fru-6P isomerization activity.

As to quaternary structure, homodimer.

The protein resides in the cytoplasm. The enzyme catalyses D-fructose 6-phosphate + L-glutamine = D-glucosamine 6-phosphate + L-glutamate. Its function is as follows. Catalyzes the first step in hexosamine metabolism, converting fructose-6P into glucosamine-6P using glutamine as a nitrogen source. This Leifsonia xyli subsp. xyli (strain CTCB07) protein is Glutamine--fructose-6-phosphate aminotransferase [isomerizing].